The sequence spans 176 residues: Oleosin Ara h 14.0103 (176 aa).

Residue alanine 2 is modified to N-acetylalanine; alternate. 3 consecutive transmembrane segments (helical) span residues 50–70 (IIAVLVGVPTGGTLLLLSGLS), 75–95 (IIGLAIATPVFIFFSPVIVPA), and 96–116 (VVTIGLAVTGILTAGACGLTG). The interval 156–176 (KTKDAGQEIQTKAQDVKRSSS) is disordered.

Belongs to the oleosin family. As to expression, expressed in seeds (at protein level).

It is found in the lipid droplet. The protein resides in the membrane. In terms of biological role, may have a structural role to stabilize the lipid body during desiccation of the seed by preventing coalescence of the oil. Probably interacts with both lipid and phospholipid moieties of lipid bodies. May also provide recognition signals for specific lipase anchorage in lipolysis during seedling growth. The protein is Oleosin Ara h 14.0103 of Arachis hypogaea (Peanut).